Reading from the N-terminus, the 266-residue chain is UPF0294 protein YafD (266 aa).

This sequence belongs to the UPF0294 family.

Its subcellular location is the cytoplasm. The chain is UPF0294 protein YafD from Salmonella dublin (strain CT_02021853).